The sequence spans 353 residues: Photosystem II protein D1 (353 aa).

Transmembrane regions (helical) follow at residues 29 to 46 (YVGW…TATI), 118 to 133 (HFLI…EWEL), and 142 to 156 (WICV…AATA). His-118 lines the chlorophyll a pocket. Residue Tyr-126 participates in pheophytin a binding. [CaMn4O5] cluster is bound by residues Asp-170 and Glu-189. Residues 197 to 218 (FHMLGVAGVFGGSLFSAMHGSL) traverse the membrane as a helical segment. Chlorophyll a is bound at residue His-198. A quinone contacts are provided by residues His-215 and 264-265 (SF). His-215 serves as a coordination point for Fe cation. His-272 is a Fe cation binding site. The helical transmembrane segment at 274–288 (FLAAWPVVGIWFTSL) threads the bilayer. [CaMn4O5] cluster-binding residues include His-332, Glu-333, Asp-342, and Ala-344. Residues 345–353 (AVKAPSIIG) constitute a propeptide that is removed on maturation.

It belongs to the reaction center PufL/M/PsbA/D family. In terms of assembly, PSII is composed of 1 copy each of membrane proteins PsbA, PsbB, PsbC, PsbD, PsbE, PsbF, PsbH, PsbI, PsbJ, PsbK, PsbL, PsbM, PsbT, PsbX, PsbY, PsbZ, Psb30/Ycf12, peripheral proteins PsbO, CyanoQ (PsbQ), PsbU, PsbV and a large number of cofactors. It forms dimeric complexes. The D1/D2 heterodimer binds P680, chlorophylls that are the primary electron donor of PSII, and subsequent electron acceptors. It shares a non-heme iron and each subunit binds pheophytin, quinone, additional chlorophylls, carotenoids and lipids. D1 provides most of the ligands for the Mn4-Ca-O5 cluster of the oxygen-evolving complex (OEC). There is also a Cl(-1) ion associated with D1 and D2, which is required for oxygen evolution. The PSII complex binds additional chlorophylls, carotenoids and specific lipids. is required as a cofactor. In terms of processing, tyr-161 forms a radical intermediate that is referred to as redox-active TyrZ, YZ or Y-Z. Post-translationally, C-terminally processed by CtpA; processing is essential to allow assembly of the oxygen-evolving complex and thus photosynthetic growth.

The protein localises to the cellular thylakoid membrane. The enzyme catalyses 2 a plastoquinone + 4 hnu + 2 H2O = 2 a plastoquinol + O2. Functionally, photosystem II (PSII) is a light-driven water:plastoquinone oxidoreductase that uses light energy to abstract electrons from H(2)O, generating O(2) and a proton gradient subsequently used for ATP formation. It consists of a core antenna complex that captures photons, and an electron transfer chain that converts photonic excitation into a charge separation. The D1/D2 (PsbA/PsbD) reaction center heterodimer binds P680, the primary electron donor of PSII as well as several subsequent electron acceptors. The chain is Photosystem II protein D1 from Prochlorothrix hollandica.